Consider the following 158-residue polypeptide: Protein BTG2 (158 aa).

Ser147 carries the post-translational modification Phosphoserine; by MAPK1 and MAPK3. Ser149 carries the post-translational modification Phosphoserine; by MAPK14.

This sequence belongs to the BTG family. Interacts with PRKCABP. Interacts with CNOT7 and CNOT8; indicative for an association with the CCR4-NOT complex. Interacts with PIN1, inducing mitochondrial depolarization. Phosphorylated at Ser-147 by MAPK1/ERK2 and MAPK3/ERK1, and at Ser-149 by MAPK14, leading to PIN1-binding and mitochondrial depolarization. As to expression, in brain at embryonic day 13.5, placenta, amnion, and spleen, which are proliferating and/or differentiating.

Anti-proliferative protein; the function is mediated by association with deadenylase subunits of the CCR4-NOT complex. Activates mRNA deadenylation in a CNOT6 and CNOT7-dependent manner. In vitro can inhibit deadenylase activity of CNOT7 and CNOT8. Involved in cell cycle regulation. Could be involved in the growth arrest and differentiation of the neuronal precursors. Modulates transcription regulation mediated by ESR1. Involved in mitochondrial depolarization and neurite outgrowth. In Rattus norvegicus (Rat), this protein is Protein BTG2 (Btg2).